Reading from the N-terminus, the 935-residue chain is Auxin response factor 6 (935 aa).

The segment at residues 129 to 231 is a DNA-binding region (TF-B3); it reads FCKTLTASDT…QLLLGIRRAN (103 aa). Disordered stretches follow at residues 536–624 and 645–714; these read QAYL…PLHT and SAMT…SASD. Low complexity-rich tracts occupy residues 546–565 and 573–582; these read QPQS…QQQQ and SASSAAVVSA. 2 stretches are compositionally biased toward polar residues: residues 583-624 and 661-689; these read MSQF…PLHT and SSFQ…SNVP. Residues 796 to 880 form the PB1 domain; it reads NTFVKVYKSG…WCIKILSPQE (85 aa). Residues 896 to 909 show a composition bias toward polar residues; sequence PSSNNVDKLPSNGN. A disordered region spans residues 896–917; that stretch reads PSSNNVDKLPSNGNCDDFGNRS.

The protein belongs to the ARF family. In terms of assembly, homodimers and heterodimers. In terms of tissue distribution, expressed in the whole plant.

Its subcellular location is the nucleus. Auxin response factors (ARFs) are transcriptional factors that bind specifically to the DNA sequence 5'-TGTCTC-3' found in the auxin-responsive promoter elements (AuxREs). Seems to act as transcriptional activator. Formation of heterodimers with Aux/IAA proteins may alter their ability to modulate early auxin response genes expression. Regulates both stamen and gynoecium maturation. Promotes jasmonic acid production. Partially redundant with ARF8. In Arabidopsis thaliana (Mouse-ear cress), this protein is Auxin response factor 6 (ARF6).